The following is a 367-amino-acid chain: Flagellar P-ring protein (367 aa).

The signal sequence occupies residues 1–21 (MYVFKALAGIVLALVATLAHA).

This sequence belongs to the FlgI family. As to quaternary structure, the basal body constitutes a major portion of the flagellar organelle and consists of four rings (L,P,S, and M) mounted on a central rod.

It is found in the periplasm. Its subcellular location is the bacterial flagellum basal body. Its function is as follows. Assembles around the rod to form the L-ring and probably protects the motor/basal body from shearing forces during rotation. The chain is Flagellar P-ring protein from Salmonella arizonae (strain ATCC BAA-731 / CDC346-86 / RSK2980).